The following is an 87-amino-acid chain: uncharacterized protein (87 aa).

A helical transmembrane segment spans residues 25–47 (FFWEVCNMILFIIIALCGYLLFS).

The protein localises to the membrane. This is an uncharacterized protein from Bacillus subtilis (strain 168).